The following is a 210-amino-acid chain: Redox-sensing transcriptional repressor Rex (210 aa).

The H-T-H motif DNA-binding region spans 15-54 (LYYRIFKRFNTDGIEKASSKQIADALGIDSATVRRDFSYF). Residue 89–94 (GCGNIG) participates in NAD(+) binding.

This sequence belongs to the transcriptional regulatory Rex family. Homodimer.

The protein resides in the cytoplasm. Functionally, modulates transcription in response to changes in cellular NADH/NAD(+) redox state. The polypeptide is Redox-sensing transcriptional repressor Rex (Streptococcus agalactiae serotype Ia (strain ATCC 27591 / A909 / CDC SS700)).